The following is a 252-amino-acid chain: Imidazole glycerol phosphate synthase subunit HisF (252 aa).

Catalysis depends on residues aspartate 11 and aspartate 130.

It belongs to the HisA/HisF family. In terms of assembly, heterodimer of HisH and HisF.

The protein localises to the cytoplasm. It carries out the reaction 5-[(5-phospho-1-deoxy-D-ribulos-1-ylimino)methylamino]-1-(5-phospho-beta-D-ribosyl)imidazole-4-carboxamide + L-glutamine = D-erythro-1-(imidazol-4-yl)glycerol 3-phosphate + 5-amino-1-(5-phospho-beta-D-ribosyl)imidazole-4-carboxamide + L-glutamate + H(+). It functions in the pathway amino-acid biosynthesis; L-histidine biosynthesis; L-histidine from 5-phospho-alpha-D-ribose 1-diphosphate: step 5/9. In terms of biological role, IGPS catalyzes the conversion of PRFAR and glutamine to IGP, AICAR and glutamate. The HisF subunit catalyzes the cyclization activity that produces IGP and AICAR from PRFAR using the ammonia provided by the HisH subunit. This Staphylococcus aureus (strain Mu3 / ATCC 700698) protein is Imidazole glycerol phosphate synthase subunit HisF.